Reading from the N-terminus, the 189-residue chain is UPF0340 protein EF_1967 (189 aa).

Belongs to the UPF0340 family.

The polypeptide is UPF0340 protein EF_1967 (Enterococcus faecalis (strain ATCC 700802 / V583)).